A 218-amino-acid chain; its full sequence is Enhancer of split M2 protein (218 aa).

Residues 1–25 (MYLDTKNLTASSTSALTAATASNSK) show a composition bias toward low complexity. 3 disordered regions span residues 1–30 (MYLD…TRRM), 64–86 (NTQQ…KSTP), and 137–164 (GRNC…SSSA). Positions 147 to 163 (SSNINSSSSSSNMNSSS) are enriched in low complexity.

In terms of biological role, part of the Notch signaling pathway. The protein is Enhancer of split M2 protein of Drosophila melanogaster (Fruit fly).